Here is a 176-residue protein sequence, read N- to C-terminus: dCTP deaminase (176 aa).

Residues R99–R104 and D115 contribute to the dCTP site. The active-site Proton donor/acceptor is the E125. Residue Q163 coordinates dCTP.

This sequence belongs to the dCTP deaminase family. In terms of assembly, homotrimer.

The catalysed reaction is dCTP + H2O + H(+) = dUTP + NH4(+). Its pathway is pyrimidine metabolism; dUMP biosynthesis; dUMP from dCTP (dUTP route): step 1/2. In terms of biological role, catalyzes the deamination of dCTP to dUTP. The chain is dCTP deaminase from Pyrobaculum islandicum (strain DSM 4184 / JCM 9189 / GEO3).